A 250-amino-acid chain; its full sequence is Expansin-like B1 (250 aa).

The signal sequence occupies residues 1–24; sequence MKHSHVLLLLFVQVIVLLPLLCLS. Positions 45–149 constitute an Expansin-like EG45 domain; the sequence is RGHCGYGEFG…QRIPCRYAGY (105 aa). Residue asparagine 72 is glycosylated (N-linked (GlcNAc...) asparagine). One can recognise an Expansin-like CBD domain in the interval 163–245; it reads HYLAILVLYV…DWTAGATYDS (83 aa).

Belongs to the expansin family. Expansin-like B subfamily.

The protein resides in the secreted. The polypeptide is Expansin-like B1 (EXLB1) (Arabidopsis thaliana (Mouse-ear cress)).